The following is a 68-amino-acid chain: Small ribosomal subunit protein bS21 (68 aa).

Positions 39-68 (PPSVKRVRKKQESERRHRKERAMRRRMMEE) are disordered. Over residues 54–68 (RHRKERAMRRRMMEE) the composition is skewed to basic residues.

This sequence belongs to the bacterial ribosomal protein bS21 family.

The chain is Small ribosomal subunit protein bS21 from Orientia tsutsugamushi (strain Ikeda) (Rickettsia tsutsugamushi).